Consider the following 462-residue polypeptide: Cysteine--tRNA ligase (462 aa).

Cys30 lines the Zn(2+) pocket. The 'HIGH' region signature appears at Met32 to His42. 3 residues coordinate Zn(2+): Cys214, His239, and Glu243. A 'KMSKS' region motif is present at residues Lys271 to Ser275. Lys274 lines the ATP pocket.

It belongs to the class-I aminoacyl-tRNA synthetase family. Monomer. Zn(2+) serves as cofactor.

The protein localises to the cytoplasm. The enzyme catalyses tRNA(Cys) + L-cysteine + ATP = L-cysteinyl-tRNA(Cys) + AMP + diphosphate. This chain is Cysteine--tRNA ligase, found in Cupriavidus necator (strain ATCC 17699 / DSM 428 / KCTC 22496 / NCIMB 10442 / H16 / Stanier 337) (Ralstonia eutropha).